Here is a 179-residue protein sequence, read N- to C-terminus: Ribosome maturation factor RimP (179 aa).

This sequence belongs to the RimP family.

The protein localises to the cytoplasm. In terms of biological role, required for maturation of 30S ribosomal subunits. This is Ribosome maturation factor RimP from Prosthecochloris aestuarii (strain DSM 271 / SK 413).